We begin with the raw amino-acid sequence, 196 residues long: Rac-like GTP-binding protein ARAC5 (196 aa).

A GTP-binding site is contributed by 16-21 (AVGKTC). The Effector region signature appears at 35–43 (YVPTVFDNF). GTP is bound by residues 119–121 (KLD) and 159–161 (SSK). Residue Cys193 is modified to Cysteine methyl ester. A lipid anchor (S-geranylgeranyl cysteine) is attached at Cys193. Residues 194–196 (VFL) constitute a propeptide, removed in mature form.

It belongs to the small GTPase superfamily. Rho family. In terms of assembly, interacts with GDI1 and ROPGEF8 homodimer. Binds to SPK1. As to expression, ubiquitous. Preferentially expressed at the tip of root hairs.

It localises to the cytoplasm. The protein resides in the membrane. It is found in the cell membrane. In terms of biological role, involved in cell polarity control during the actin-dependent tip growth of root hairs, thus regulating root hair length and root hair initiation. Functionally, inactive GDP-bound Rho GTPases reside in the cytosol, are found in a complex with Rho GDP-dissociation inhibitors (Rho GDIs), and are released from the GDI protein in order to translocate to membranes upon activation. This chain is Rac-like GTP-binding protein ARAC5, found in Arabidopsis thaliana (Mouse-ear cress).